A 460-amino-acid chain; its full sequence is Proline--tRNA ligase (460 aa).

It belongs to the class-II aminoacyl-tRNA synthetase family. ProS type 3 subfamily. In terms of assembly, homodimer.

Its subcellular location is the cytoplasm. It catalyses the reaction tRNA(Pro) + L-proline + ATP = L-prolyl-tRNA(Pro) + AMP + diphosphate. Functionally, catalyzes the attachment of proline to tRNA(Pro) in a two-step reaction: proline is first activated by ATP to form Pro-AMP and then transferred to the acceptor end of tRNA(Pro). This chain is Proline--tRNA ligase, found in Methanococcus maripaludis (strain C5 / ATCC BAA-1333).